The sequence spans 101 residues: Small ribosomal subunit protein uS10 (101 aa).

This sequence belongs to the universal ribosomal protein uS10 family. In terms of assembly, part of the 30S ribosomal subunit.

Functionally, involved in the binding of tRNA to the ribosomes. The protein is Small ribosomal subunit protein uS10 of Flavobacterium psychrophilum (strain ATCC 49511 / DSM 21280 / CIP 103535 / JIP02/86).